Reading from the N-terminus, the 174-residue chain is ATP-dependent protease subunit HslV (174 aa).

The active site involves T2. Residues G157, C160, and T163 each contribute to the Na(+) site.

The protein belongs to the peptidase T1B family. HslV subfamily. A double ring-shaped homohexamer of HslV is capped on each side by a ring-shaped HslU homohexamer. The assembly of the HslU/HslV complex is dependent on binding of ATP.

Its subcellular location is the cytoplasm. It catalyses the reaction ATP-dependent cleavage of peptide bonds with broad specificity.. Allosterically activated by HslU binding. In terms of biological role, protease subunit of a proteasome-like degradation complex believed to be a general protein degrading machinery. This is ATP-dependent protease subunit HslV from Yersinia enterocolitica serotype O:8 / biotype 1B (strain NCTC 13174 / 8081).